Here is a 263-residue protein sequence, read N- to C-terminus: Putative S-adenosyl-L-methionine-dependent methyltransferase Mkms_0098 (263 aa).

Residues Asp121 and 150–151 (ES) each bind S-adenosyl-L-methionine.

The protein belongs to the UPF0677 family.

Functionally, exhibits S-adenosyl-L-methionine-dependent methyltransferase activity. In Mycobacterium sp. (strain KMS), this protein is Putative S-adenosyl-L-methionine-dependent methyltransferase Mkms_0098.